Consider the following 585-residue polypeptide: Protein cereblon (585 aa).

Disordered regions lie at residues 1–109 (MDEE…DLES) and 156–195 (FSQERRRSRTSEETSQEAAEQPVDPPPQQPPRPPIDIGFD). Residues 80 to 95 (QDDTASEGSHPSSDMS) are compositionally biased toward polar residues. The span at 158 to 167 (QERRRSRTSE) shows a compositional bias: basic and acidic residues. The segment covering 178–189 (VDPPPQQPPRPP) has biased composition (pro residues). The 227-residue stretch at 225 to 451 (HMLIFLHQHI…LIKSTFKDET (227 aa)) folds into the Lon N-terminal domain. One can recognise a CULT domain in the interval 450-559 (ETLFFCRYCN…LAGSSVRIGK (110 aa)). Zn(2+)-binding residues include cysteine 455, cysteine 458, cysteine 524, and cysteine 527.

This sequence belongs to the CRBN family. As to quaternary structure, likely a component of a DCX (DDB1-CUL4-X-box) protein ligase complex. May interact with pic/DDB1. Ubiquitinated. Expressed in the fat body (at protein level).

Its subcellular location is the nucleus. It participates in protein modification; protein ubiquitination. Its function is as follows. Substrate recognition component of a DCX (DDB1-CUL4-X-box) E3 protein ligase complex that mediates the ubiquitination and subsequent proteasomal degradation of target proteins. Has an essential role in mediating growth by negatively regulating insulin signaling. It also has a role in maintaining presynaptic function in the neuromuscular junction synapses of third-instar larvae. The polypeptide is Protein cereblon (Drosophila melanogaster (Fruit fly)).